A 249-amino-acid polypeptide reads, in one-letter code: Proteasome activator complex subunit 1 (249 aa).

The disordered stretch occupies residues 60–101 (PLDIPVPDPVKEKEKGERKKQQEKEDKDEKKKGEDEDKGPPC). The segment covering 68–98 (PVKEKEKGERKKQQEKEDKDEKKKGEDEDKG) has biased composition (basic and acidic residues).

Belongs to the PA28 family. Heterodimer of PSME1 and PSME2, which forms a hexameric ring. PSME1 can form homoheptamers.

Implicated in immunoproteasome assembly and required for efficient antigen processing. The PA28 activator complex enhances the generation of class I binding peptides by altering the cleavage pattern of the proteasome. The polypeptide is Proteasome activator complex subunit 1 (PSME1) (Macaca fascicularis (Crab-eating macaque)).